Here is a 400-residue protein sequence, read N- to C-terminus: Tryptophan--tRNA ligase, cytoplasmic (400 aa).

The short motif at 95-104 is the 'HIGH' region element; sequence PSSGSLHFGH. Residues 281-285 carry the 'KMSKS' region motif; sequence KMSAS.

This sequence belongs to the class-I aminoacyl-tRNA synthetase family.

It localises to the cytoplasm. It catalyses the reaction tRNA(Trp) + L-tryptophan + ATP = L-tryptophyl-tRNA(Trp) + AMP + diphosphate + H(+). This Dictyostelium discoideum (Social amoeba) protein is Tryptophan--tRNA ligase, cytoplasmic (trpS).